The chain runs to 343 residues: Protein RecA (343 aa).

ATP is bound at residue 64–71 (GPESSGKT).

It belongs to the RecA family.

The protein resides in the cytoplasm. In terms of biological role, can catalyze the hydrolysis of ATP in the presence of single-stranded DNA, the ATP-dependent uptake of single-stranded DNA by duplex DNA, and the ATP-dependent hybridization of homologous single-stranded DNAs. It interacts with LexA causing its activation and leading to its autocatalytic cleavage. This chain is Protein RecA, found in Cereibacter sphaeroides (strain ATCC 17023 / DSM 158 / JCM 6121 / CCUG 31486 / LMG 2827 / NBRC 12203 / NCIMB 8253 / ATH 2.4.1.) (Rhodobacter sphaeroides).